The sequence spans 478 residues: Pyruvate kinase (478 aa).

Arginine 35 contacts substrate. K(+)-binding residues include asparagine 37, serine 39, and aspartate 69. ATP is bound at residue 37–40 (NMSH). ATP is bound by residues arginine 76 and lysine 157. Mg(2+) is bound at residue glutamate 219. Substrate is bound by residues glycine 242, aspartate 243, and threonine 275. Aspartate 243 is a Mg(2+) binding site.

This sequence belongs to the pyruvate kinase family. In terms of assembly, homotetramer. Requires Mg(2+) as cofactor. K(+) is required as a cofactor.

It catalyses the reaction pyruvate + ATP = phosphoenolpyruvate + ADP + H(+). It functions in the pathway carbohydrate degradation; glycolysis; pyruvate from D-glyceraldehyde 3-phosphate: step 5/5. The protein is Pyruvate kinase (pyk) of Methylorubrum extorquens (strain ATCC 14718 / DSM 1338 / JCM 2805 / NCIMB 9133 / AM1) (Methylobacterium extorquens).